We begin with the raw amino-acid sequence, 277 residues long: Carbonyl reductase [NADPH] 3 (277 aa).

Ser-2 is modified (N-acetylserine). Residues 10 to 34, 38 to 42, 63 to 64, and Asn-90 each bind NADP(+); these read VTGA…GDVV, RDEAR, and DI. The residue at position 30 (Ser-30) is a Phosphoserine. Ser-140 contributes to the substrate binding site. The Proton acceptor role is filled by Tyr-194. 194–198 is an NADP(+) binding site; it reads YGVSK.

Belongs to the short-chain dehydrogenases/reductases (SDR) family.

It is found in the cytoplasm. It catalyses the reaction a secondary alcohol + NADP(+) = a ketone + NADPH + H(+). It carries out the reaction a quinone + NADPH + H(+) = a quinol + NADP(+). Catalyzes the NADPH-dependent reduction of carbonyl compounds to their corresponding alcohols. Has low NADPH-dependent oxidoreductase activity. Acts on several orthoquinones, as well as on non-quinone compounds, such as isatin or on the anticancer drug oracin. Best substrates for CBR3 is 1,2- naphthoquinone, hence could play a role in protection against cytotoxicity of exogenous quinones. Exerts activity toward ortho-quinones but not paraquinones. No endogenous substrate for CBR3 except isatin has been identified. The polypeptide is Carbonyl reductase [NADPH] 3 (Cbr3) (Mus musculus (Mouse)).